Here is a 481-residue protein sequence, read N- to C-terminus: Protein nucleotidyltransferase YdiU (481 aa).

ATP-binding residues include G85, G87, R88, K108, D120, G121, R172, and R179. D248 serves as the catalytic Proton acceptor. The Mg(2+) site is built by N249 and D258. ATP is bound at residue D258.

The protein belongs to the SELO family. Requires Mg(2+) as cofactor. Mn(2+) serves as cofactor.

The enzyme catalyses L-seryl-[protein] + ATP = 3-O-(5'-adenylyl)-L-seryl-[protein] + diphosphate. The catalysed reaction is L-threonyl-[protein] + ATP = 3-O-(5'-adenylyl)-L-threonyl-[protein] + diphosphate. It catalyses the reaction L-tyrosyl-[protein] + ATP = O-(5'-adenylyl)-L-tyrosyl-[protein] + diphosphate. It carries out the reaction L-histidyl-[protein] + UTP = N(tele)-(5'-uridylyl)-L-histidyl-[protein] + diphosphate. The enzyme catalyses L-seryl-[protein] + UTP = O-(5'-uridylyl)-L-seryl-[protein] + diphosphate. The catalysed reaction is L-tyrosyl-[protein] + UTP = O-(5'-uridylyl)-L-tyrosyl-[protein] + diphosphate. Nucleotidyltransferase involved in the post-translational modification of proteins. It can catalyze the addition of adenosine monophosphate (AMP) or uridine monophosphate (UMP) to a protein, resulting in modifications known as AMPylation and UMPylation. The sequence is that of Protein nucleotidyltransferase YdiU from Cereibacter sphaeroides (strain ATCC 17025 / ATH 2.4.3) (Rhodobacter sphaeroides).